Reading from the N-terminus, the 419-residue chain is Subtilisin-like protease 2 (419 aa).

Positions 1-16 (MQLLNFGLLLLPFVAG) are cleaved as a signal peptide. The propeptide occupies 17–122 (DLAPQPEPLL…VHPDQHVYLA (106 aa)). The Inhibitor I9 domain maps to 36–122 (QYIVTLKEGL…VHPDQHVYLA (87 aa)). The Peptidase S8 domain occupies 131-419 (RWGLGYMSSK…IQERKFKLPK (289 aa)). Residues aspartate 169 and histidine 201 each act as charge relay system in the active site. N-linked (GlcNAc...) asparagine glycosylation is found at asparagine 248, asparagine 261, and asparagine 348. The active-site Charge relay system is serine 357. A glycan (N-linked (GlcNAc...) asparagine) is linked at asparagine 388.

It belongs to the peptidase S8 family.

The protein resides in the secreted. In terms of biological role, secreted subtilisin-like serine protease with keratinolytic activity that contributes to pathogenicity. In Trichophyton verrucosum (Cattle ringworm fungus), this protein is Subtilisin-like protease 2 (SUB2).